The chain runs to 204 residues: MSKRKSAKYKLDRRMGENIWGRPNSPVNKRSYGPGQHGQRRKGKTSDFGLQLRAKQKLKGYYGDVTEKQFRRTYAEASRMKGDTGQNLIGLLEQRLDMVVYRAKFAPTVFAARQIVNHGHIYVNGVKTNIPSARVKVGDVISLGNKAKEMALVIEAQSLPEREIPDYVAPDGNDKVTFTRVPKLDEVPYPVTMEPNLVVEFYSR.

The disordered stretch occupies residues 1-49 (MSKRKSAKYKLDRRMGENIWGRPNSPVNKRSYGPGQHGQRRKGKTSDFG). The S4 RNA-binding domain maps to 94–154 (QRLDMVVYRA…NKAKEMALVI (61 aa)).

Belongs to the universal ribosomal protein uS4 family. In terms of assembly, part of the 30S ribosomal subunit. Contacts protein S5. The interaction surface between S4 and S5 is involved in control of translational fidelity.

Its function is as follows. One of the primary rRNA binding proteins, it binds directly to 16S rRNA where it nucleates assembly of the body of the 30S subunit. With S5 and S12 plays an important role in translational accuracy. This is Small ribosomal subunit protein uS4 from Erythrobacter litoralis (strain HTCC2594).